The primary structure comprises 98 residues: Aspartyl/glutamyl-tRNA(Asn/Gln) amidotransferase subunit C (98 aa).

This sequence belongs to the GatC family. In terms of assembly, heterotrimer of A, B and C subunits.

It carries out the reaction L-glutamyl-tRNA(Gln) + L-glutamine + ATP + H2O = L-glutaminyl-tRNA(Gln) + L-glutamate + ADP + phosphate + H(+). The catalysed reaction is L-aspartyl-tRNA(Asn) + L-glutamine + ATP + H2O = L-asparaginyl-tRNA(Asn) + L-glutamate + ADP + phosphate + 2 H(+). Its function is as follows. Allows the formation of correctly charged Asn-tRNA(Asn) or Gln-tRNA(Gln) through the transamidation of misacylated Asp-tRNA(Asn) or Glu-tRNA(Gln) in organisms which lack either or both of asparaginyl-tRNA or glutaminyl-tRNA synthetases. The reaction takes place in the presence of glutamine and ATP through an activated phospho-Asp-tRNA(Asn) or phospho-Glu-tRNA(Gln). The sequence is that of Aspartyl/glutamyl-tRNA(Asn/Gln) amidotransferase subunit C from Roseiflexus castenholzii (strain DSM 13941 / HLO8).